The primary structure comprises 154 residues: Bacterial ferritin (154 aa).

Positions 1 to 145 (MQGNQAVVDY…QQLRLIELIG (145 aa)) constitute a Ferritin-like diiron domain. 6 residues coordinate Fe cation: E18, E51, H54, E93, E127, and H130.

It belongs to the bacterioferritin family. Forms a bacterioferritin (BFR) complex with BfrB. Heterooligomer of 24 subunits, arranged as 12 dimers, that are packed together to form an approximately spherical molecule with a central cavity, in which large amounts of iron can be deposited.

It is found in the cytoplasm. It carries out the reaction 4 Fe(2+) + O2 + 4 H(+) = 4 Fe(3+) + 2 H2O. The enzyme catalyses Fe(2+)(in) = Fe(2+)(out). Functionally, iron-storage protein. Its ferroxidase center binds Fe(2+), oxidizes it using dioxygen to Fe(3+), and participates in the subsequent Fe(3+) oxide mineral core formation within the central cavity of the BFR protein shell. Plays a role in protection against iron-mediated oxidative stress. This chain is Bacterial ferritin, found in Neisseria gonorrhoeae.